Here is a 501-residue protein sequence, read N- to C-terminus: Sugar phosphate exchanger 3 (501 aa).

The helical transmembrane segment at 20–40 (CTHHHIVVFLLTFFSYSLLHA) threads the bilayer. Asparagine 62 is a glycosylation site (N-linked (GlcNAc...) asparagine). Transmembrane regions (helical) follow at residues 87-107 (TLFL…GLFV), 119-139 (WVLS…GTLT), 153-173 (LWVV…AVMG), 183-203 (FVFG…AFLA), and 214-234 (AFLV…CGLL). N-linked (GlcNAc...) asparagine glycosylation is present at asparagine 273. A run of 6 helical transmembrane segments spans residues 298–320 (GVVL…FFWL), 340–360 (IWYD…SDVL), 364–384 (APVL…YSRS), 393–413 (VIMA…SSAI), 435–455 (GIVD…VSLI), and 459–479 (LGWM…ILFI).

This sequence belongs to the major facilitator superfamily. Organophosphate:Pi antiporter (OPA) (TC 2.A.1.4) family.

Its subcellular location is the endoplasmic reticulum membrane. It localises to the lysosome membrane. Its function is as follows. Unlike the other SLC37 members, seems to lack glucose-6-phosphate antiporter activity. The polypeptide is Sugar phosphate exchanger 3 (SLC37A3) (Gallus gallus (Chicken)).